We begin with the raw amino-acid sequence, 335 residues long: N-acetyl-gamma-glutamyl-phosphate reductase (335 aa).

Residue cysteine 155 is part of the active site.

The protein belongs to the NAGSA dehydrogenase family. Type 1 subfamily.

Its subcellular location is the cytoplasm. The catalysed reaction is N-acetyl-L-glutamate 5-semialdehyde + phosphate + NADP(+) = N-acetyl-L-glutamyl 5-phosphate + NADPH + H(+). The protein operates within amino-acid biosynthesis; L-arginine biosynthesis; N(2)-acetyl-L-ornithine from L-glutamate: step 3/4. In terms of biological role, catalyzes the NADPH-dependent reduction of N-acetyl-5-glutamyl phosphate to yield N-acetyl-L-glutamate 5-semialdehyde. The protein is N-acetyl-gamma-glutamyl-phosphate reductase of Pasteurella multocida (strain Pm70).